A 1228-amino-acid chain; its full sequence is Nitrate reductase alpha chain (1228 aa).

The 4Fe-4S Mo/W bis-MGD-type domain maps to 47 to 111 (DKVVRSTHGV…SFSWYIYSPL (65 aa)). 4 residues coordinate [4Fe-4S] cluster: His-54, Cys-58, Cys-62, and Cys-97. Residue Asp-227 participates in Mo-bis(molybdopterin guanine dinucleotide) binding.

Belongs to the prokaryotic molybdopterin-containing oxidoreductase family. Requires [4Fe-4S] cluster as cofactor. Mo-bis(molybdopterin guanine dinucleotide) serves as cofactor.

Its subcellular location is the cell membrane. It carries out the reaction nitrate + a quinol = a quinone + nitrite + H2O. In terms of biological role, the alpha chain is the actual site of nitrate reduction. In Bacillus subtilis (strain 168), this protein is Nitrate reductase alpha chain (narG).